Reading from the N-terminus, the 635-residue chain is Elongation factor 4 (635 aa).

One can recognise a tr-type G domain in the interval Glu-11–Thr-193. GTP-binding positions include Asp-23 to Thr-28 and Asn-140 to Asp-143.

The protein belongs to the TRAFAC class translation factor GTPase superfamily. Classic translation factor GTPase family. LepA subfamily.

It localises to the cell membrane. The catalysed reaction is GTP + H2O = GDP + phosphate + H(+). Required for accurate and efficient protein synthesis under certain stress conditions. May act as a fidelity factor of the translation reaction, by catalyzing a one-codon backward translocation of tRNAs on improperly translocated ribosomes. Back-translocation proceeds from a post-translocation (POST) complex to a pre-translocation (PRE) complex, thus giving elongation factor G a second chance to translocate the tRNAs correctly. Binds to ribosomes in a GTP-dependent manner. The chain is Elongation factor 4 from Streptococcus pyogenes serotype M12 (strain MGAS2096).